The primary structure comprises 465 residues: Probable Xaa-Pro aminopeptidase pepP (465 aa).

Mn(2+) contacts are provided by D261, D272, E395, and E435.

Belongs to the peptidase M24B family. The cofactor is Mn(2+).

It catalyses the reaction Release of any N-terminal amino acid, including proline, that is linked to proline, even from a dipeptide or tripeptide.. Its function is as follows. Catalyzes the removal of a penultimate prolyl residue from the N-termini of peptides. The chain is Probable Xaa-Pro aminopeptidase pepP (pepP) from Talaromyces marneffei (strain ATCC 18224 / CBS 334.59 / QM 7333) (Penicillium marneffei).